The chain runs to 417 residues: Pygopus homolog 1 (417 aa).

The segment covering 1 to 11 (MSAEQDKEPIA) has biased composition (basic and acidic residues). Disordered stretches follow at residues 1-71 (MSAE…AANP), 175-265 (HFRQ…MEDP), and 284-318 (ENSR…CTPD). Residues 18–27 (GDSGLDGLGG) are compositionally biased toward gly residues. The short motif at 35–41 (PDKKKRK) is the Nuclear localization signal element. Composition is skewed to polar residues over residues 180–221 (SAEN…TNHS), 240–256 (DFTQ…SSTH), and 284–305 (ENSR…QNKP). The segment at 338-396 (VYPCGICTNEVNDDQDAILCEASCQKWFHRICTGMTETAYGLLTAEASAVWGCDTCMAD) adopts a PHD-type zinc-finger fold. The tract at residues 339-386 (YPCGICTNEVNDDQDAILCEASCQKWFHRICTGMTETAYGLLTAEASA) is interaction with H3K4me2. An interaction with BCL9 region spans residues 371–389 (GMTETAYGLLTAEASAVWG).

Interacts with BCL9 via The PHD-type zinc finger motiv, and thereby becomes part of the nuclear beta-catenin/TCF complex. Found in a complex with BCL9L, CDC73, CTNNB1 and PYGO1. Interacts with histone H3 mono-, di- or tri-methylated at 'Lys4' (H3K4me1, H3K4me2, H3K4me3); the interaction is enhanced by the interaction with BCL9.

The protein localises to the nucleus. Functionally, involved in signal transduction through the Wnt pathway. The polypeptide is Pygopus homolog 1 (Pygo1) (Mus musculus (Mouse)).